Consider the following 111-residue polypeptide: BET1-like protein (111 aa).

Residues 1 to 86 lie on the Cytoplasmic side of the membrane; the sequence is MADWARAQSP…MARSGRDNRK (86 aa). A phosphoserine mark is found at Ser9 and Ser37. The t-SNARE coiled-coil homology domain occupies 15–77; that stretch reads EILDRENKRM…TGSVKRFSTM (63 aa). Residues 87–107 form a helical; Anchor for type IV membrane protein membrane-spanning segment; the sequence is LLCGVAVGLIVAFFILSYLLS. The Lumenal segment spans residues 108-111; sequence RART.

Component of a SNARE complex consisting of STX5, YKT6, GOSR1 and BET1L. Interacts with STX5.

It is found in the golgi apparatus membrane. It localises to the golgi apparatus. The protein resides in the trans-Golgi network membrane. In terms of biological role, vesicle SNARE required for targeting and fusion of retrograde transport vesicles with the Golgi complex. Required for the integrity of the Golgi complex. This Bos taurus (Bovine) protein is BET1-like protein.